We begin with the raw amino-acid sequence, 28 residues long: Dermaseptin-2 (28 aa).

A Glutamine amide modification is found at Gln28.

The protein belongs to the frog skin active peptide (FSAP) family. Dermaseptin subfamily. As to expression, expressed by the skin glands.

The protein localises to the secreted. Antimicrobial peptide with activity against the Gram-positive bacterium S.aureus, and the Gram-negative bacteria E.coli and P.aeruginosa. Probably acts by disturbing membrane functions with its amphipathic structure. Has an activity of stimulation of insulin release, which may protect the species from being eaten by predators by causing fatal hypoglycemia. Has hemolytic activity (60% hemolysis at 128 ug/ml). The polypeptide is Dermaseptin-2 (Phyllomedusa tarsius (Brownbelly leaf frog)).